Reading from the N-terminus, the 248-residue chain is Phosphate import ATP-binding protein PstB (248 aa).

The ABC transporter domain maps to 1-243 (MAVNDVNVFY…PQHNLTQGYI (243 aa)). 33-40 (GPSGCGKS) is a binding site for ATP.

The protein belongs to the ABC transporter superfamily. Phosphate importer (TC 3.A.1.7) family. In terms of assembly, the complex is composed of two ATP-binding proteins (PstB), two transmembrane proteins (PstC and PstA) and a solute-binding protein (PstS).

It localises to the cell inner membrane. The catalysed reaction is phosphate(out) + ATP + H2O = ADP + 2 phosphate(in) + H(+). Its function is as follows. Part of the ABC transporter complex PstSACB involved in phosphate import. Responsible for energy coupling to the transport system. This Rhodospirillum rubrum (strain ATCC 11170 / ATH 1.1.1 / DSM 467 / LMG 4362 / NCIMB 8255 / S1) protein is Phosphate import ATP-binding protein PstB.